A 379-amino-acid chain; its full sequence is Glucose-1-phosphate adenylyltransferase (379 aa).

Residues glycine 164, 179–180 (EK), and serine 190 contribute to the alpha-D-glucose 1-phosphate site.

It belongs to the bacterial/plant glucose-1-phosphate adenylyltransferase family. Homotetramer.

The enzyme catalyses alpha-D-glucose 1-phosphate + ATP + H(+) = ADP-alpha-D-glucose + diphosphate. The protein operates within glycan biosynthesis; glycogen biosynthesis. Its function is as follows. Involved in the biosynthesis of ADP-glucose, a building block required for the elongation reactions to produce glycogen. Catalyzes the reaction between ATP and alpha-D-glucose 1-phosphate (G1P) to produce pyrophosphate and ADP-Glc. The sequence is that of Glucose-1-phosphate adenylyltransferase from Lactiplantibacillus plantarum (strain ATCC BAA-793 / NCIMB 8826 / WCFS1) (Lactobacillus plantarum).